The sequence spans 228 residues: PKHD-type hydroxylase Vapar_1809 (228 aa).

The Fe2OG dioxygenase domain maps to 78-179 (QISPPLFNRY…RTASYFWIQS (102 aa)). Fe cation contacts are provided by histidine 97, aspartate 99, and histidine 160. Arginine 170 contacts 2-oxoglutarate.

It depends on Fe(2+) as a cofactor. The cofactor is L-ascorbate.

The protein is PKHD-type hydroxylase Vapar_1809 of Variovorax paradoxus (strain S110).